The following is a 321-amino-acid chain: Nod factor export ATP-binding protein I (321 aa).

One can recognise an ABC transporter domain in the interval 17 to 247 (LSVEGLRKRY…EIGCDVVEVY (231 aa)). ATP is bound at residue 49-56 (GPNGAGKT).

The protein belongs to the ABC transporter superfamily. Lipooligosaccharide exporter (TC 3.A.1.102) family. The complex is composed of two ATP-binding proteins (NodI) and two transmembrane proteins (NodJ).

Its subcellular location is the cell inner membrane. Functionally, part of the ABC transporter complex NodIJ involved in the export of the nodulation factors (Nod factors), the bacterial signal molecules that induce symbiosis and subsequent nodulation induction. Nod factors are LCO (lipo-chitin oligosaccharide), a modified beta-1,4-linked N-acetylglucosamine oligosaccharide. This subunit is responsible for energy coupling to the transport system. This Ralstonia nicotianae (strain ATCC BAA-1114 / GMI1000) (Ralstonia solanacearum) protein is Nod factor export ATP-binding protein I.